Consider the following 382-residue polypeptide: G2/mitotic-specific cyclin-B2 (382 aa).

The segment covering 1–12 (MSSVEAVTQQQL) has biased composition (polar residues). The disordered stretch occupies residues 1-78 (MSSVEAVTQQ…HTSAGDPAPI (78 aa)). Over residues 38-47 (NRNAAAAANR) the composition is skewed to low complexity.

This sequence belongs to the cyclin family. Cyclin AB subfamily. In terms of assembly, interacts with the CDK1 protein kinase to form a serine/threonine kinase holoenzyme complex also known as maturation promoting factor (MPF). The cyclin subunit imparts substrate specificity to the complex.

In terms of biological role, essential for the control of the cell cycle at the G2/M (mitosis) transition. In Oryzias javanicus (Javanese ricefish), this protein is G2/mitotic-specific cyclin-B2 (ccnb2).